The following is a 166-amino-acid chain: Cyclic pyranopterin monophosphate synthase (166 aa).

Residues 83–85 (LCH) and 121–122 (ME) contribute to the substrate site. Aspartate 136 is a catalytic residue.

It belongs to the MoaC family. Homohexamer; trimer of dimers.

The catalysed reaction is (8S)-3',8-cyclo-7,8-dihydroguanosine 5'-triphosphate = cyclic pyranopterin phosphate + diphosphate. It participates in cofactor biosynthesis; molybdopterin biosynthesis. In terms of biological role, catalyzes the conversion of (8S)-3',8-cyclo-7,8-dihydroguanosine 5'-triphosphate to cyclic pyranopterin monophosphate (cPMP). The protein is Cyclic pyranopterin monophosphate synthase of Trichodesmium erythraeum (strain IMS101).